A 637-amino-acid polypeptide reads, in one-letter code: Cell division cycle-related protein res1/sct1 (637 aa).

An HTH APSES-type domain is found at 6–112 (IHKITYSGVE…YSGSAFMPMS (107 aa)). The segment at residues 37 to 58 (ATQILKIAELDKPRRTRILEKF) is a DNA-binding region (H-T-H motif). A disordered region spans residues 114–137 (FTPQSNRKPTEAYRRNSPVKKSFS). ANK repeat units follow at residues 236 to 265 (DGHTALHWAAAMGNLEMMHALLQAGANVVA) and 357 to 386 (HGDTALLICARNGAKKCARLLLSFYASSSI).

In terms of assembly, DSC1 contains cdc10 and sct1/res1.

In terms of biological role, acts as a positive regulator of the mitotic cell cycle and as a negative regulator of sexual differentiation. May be involved in the transcriptional regulation of the cdc22 and cdt1 genes. Is an integral component of the DSC1-like complex. The protein is Cell division cycle-related protein res1/sct1 (res1) of Schizosaccharomyces pombe (strain 972 / ATCC 24843) (Fission yeast).